The following is a 48-amino-acid chain: MGGKGGKGGKGLGKVGAKKRHSRRVIRENIQGITKPAIRRLARRGGVK.

Positions methionine 1–lysine 14 are enriched in gly residues. Positions methionine 1–arginine 23 are disordered.

Belongs to the histone H4 family. In terms of assembly, the nucleosome is a histone octamer containing two molecules each of H2A, H2B, H3 and H4 assembled in one H3-H4 heterotetramer and two H2A-H2B heterodimers. The octamer wraps approximately 147 bp of DNA.

The protein resides in the nucleus. It is found in the chromosome. In terms of biological role, core component of nucleosome. Nucleosomes wrap and compact DNA into chromatin, limiting DNA accessibility to the cellular machineries which require DNA as a template. Histones thereby play a central role in transcription regulation, DNA repair, DNA replication and chromosomal stability. DNA accessibility is regulated via a complex set of post-translational modifications of histones, also called histone code, and nucleosome remodeling. This Blepharisma japonicum protein is Histone H4.